Consider the following 327-residue polypeptide: MAIFNNTTSSSSNFLLTAFPGLECAHVWISIPVCCLYTIALLGNSMIFLVIITKRRLHKPMYYFLSMLAAVDLCLTITTLPTVLGVLWFHAREISFKACFIQMFFVHAFSLLESSVLVAMAFDRFVAICNPLNYATILTDRMVLVIGLVICIRPAVFLLPLLVAINTVSFHGGHELSHPFCYHPEVIKYTYSKPWISSFWGLFLQLYLNGTDVLFILFSYVLILRTVLGIVARKKQQKALSTCVCHICAVTIFYVPLISLSLAHRLFHSTPRVLCSTLANIYLLLPPVLNPIIYSLKTKTIRQAMFQLLQSKGSWGFNVRGLRGRWD.

At 1-27 (MAIFNNTTSSSSNFLLTAFPGLECAHV) the chain is on the extracellular side. N-linked (GlcNAc...) asparagine glycosylation is found at asparagine 5 and asparagine 6. Residues 28–48 (WISIPVCCLYTIALLGNSMIF) form a helical membrane-spanning segment. Residues 49–56 (LVIITKRR) lie on the Cytoplasmic side of the membrane. Residues 57-77 (LHKPMYYFLSMLAAVDLCLTI) form a helical membrane-spanning segment. At 78-101 (TTLPTVLGVLWFHAREISFKACFI) the chain is on the extracellular side. The chain crosses the membrane as a helical span at residues 102–122 (QMFFVHAFSLLESSVLVAMAF). Residues 123 to 141 (DRFVAICNPLNYATILTDR) are Cytoplasmic-facing. The chain crosses the membrane as a helical span at residues 142 to 162 (MVLVIGLVICIRPAVFLLPLL). At 163 to 198 (VAINTVSFHGGHELSHPFCYHPEVIKYTYSKPWISS) the chain is on the extracellular side. The helical transmembrane segment at 199–219 (FWGLFLQLYLNGTDVLFILFS) threads the bilayer. Residues 220–239 (YVLILRTVLGIVARKKQQKA) are Cytoplasmic-facing. A helical transmembrane segment spans residues 240–260 (LSTCVCHICAVTIFYVPLISL). Residues 261–275 (SLAHRLFHSTPRVLC) are Extracellular-facing. The chain crosses the membrane as a helical span at residues 276–296 (STLANIYLLLPPVLNPIIYSL). The Cytoplasmic segment spans residues 297-327 (KTKTIRQAMFQLLQSKGSWGFNVRGLRGRWD).

Belongs to the G-protein coupled receptor 1 family.

It is found in the cell membrane. In terms of biological role, odorant receptor. This is Olfactory receptor 51T1 (OR51T1) from Homo sapiens (Human).